The chain runs to 200 residues: Ras-related protein Rab-10 (200 aa).

Positions 18, 19, 20, 21, 22, 23, 24, 35, 36, 40, and 41 each coordinate GTP. Thr23 lines the Mg(2+) pocket. 2 short sequence motifs (switch) span residues 32–46 and 64–81; these read DAFN…EIDF and DTAG…YYRG. The Mg(2+) site is built by Thr41 and Asp64. Gly67 contributes to the GTP binding site. Position 73 is a phosphothreonine (Thr73). Lys102 is modified (N6-acetyllysine). Residue Lys102 forms a Glycyl lysine isopeptide (Lys-Gly) (interchain with G-Cter in ubiquitin) linkage. GTP is bound by residues Asn122, Lys123, Asp125, and Met126. Lys136 participates in a covalent cross-link: Glycyl lysine isopeptide (Lys-Gly) (interchain with G-Cter in ubiquitin). Residues Ser152, Ala153, and Lys154 each contribute to the GTP site. A Glycyl lysine isopeptide (Lys-Gly) (interchain with G-Cter in ubiquitin) cross-link involves residue Lys154. Residues Cys199 and Cys200 are each lipidated (S-geranylgeranyl cysteine).

This sequence belongs to the small GTPase superfamily. Rab family. In terms of assembly, interacts with MYO5A; mediates the transport to the plasma membrane of SLC2A4/GLUT4 storage vesicles. Interacts with GDI1 and with GDI2; negatively regulates RAB10 association with membranes and activation. Interacts (GDP-bound form) with LLGL1; the interaction is direct and promotes RAB10 association with membranes and activation through competition with the Rab inhibitor GDI1. Interacts with EXOC4; probably associates with the exocyst. Interacts (GTP-bound form) with MICALCL, MICAL1, MICAL3, EHBP1 and EHBP1L1; at least in case of MICAL1 two molecules of RAB10 can bind to one molecule of MICAL1. Interacts with TBC1D13. Interacts with SEC16A. Interacts with CHM. Interacts with LRRK2; interaction facilitates phosphorylation of Thr-73. Interacts with RILPL1 and RILPL2 when phosphorylated on Thr-73. Interacts with TBC1D21. Interacts with MARCKS. Mg(2+) is required as a cofactor. Post-translationally, phosphorylation of Thr-73 in the switch II region by LRRK2 prevents the association of RAB regulatory proteins, including CHM and RAB GDP dissociation inhibitors GDI1 and GDI2. Phosphorylation of Thr-73 by LRRK2 is stimulated by RAB29 and RAB32. Phosphorylation by LRRK2 is required for localization to stressed lysosomes. Highest levels in neural and muscle tissues.

The protein localises to the cytoplasmic vesicle membrane. Its subcellular location is the golgi apparatus. The protein resides in the trans-Golgi network membrane. It localises to the endosome membrane. It is found in the recycling endosome membrane. The protein localises to the cytoplasmic vesicle. Its subcellular location is the phagosome membrane. The protein resides in the cell projection. It localises to the cilium. It is found in the endoplasmic reticulum membrane. The protein localises to the cytoplasm. Its subcellular location is the perinuclear region. The protein resides in the lysosome. The enzyme catalyses GTP + H2O = GDP + phosphate + H(+). Regulated by guanine nucleotide exchange factors (GEFs) DENND4C and RABIF which promote the exchange of bound GDP for free GTP. Regulated by GTPase activating proteins (GAPs) including TBC1D21 which increase the GTP hydrolysis activity. Inhibited by GDP dissociation inhibitors GDI1 and GDI2 which prevent Rab-GDP dissociation. Its function is as follows. The small GTPases Rab are key regulators of intracellular membrane trafficking, from the formation of transport vesicles to their fusion with membranes. Rabs cycle between an inactive GDP-bound form and an active GTP-bound form that is able to recruit to membranes different set of downstream effectors directly responsible for vesicle formation, movement, tethering and fusion. That Rab is mainly involved in the biosynthetic transport of proteins from the Golgi to the plasma membrane. Regulates, for instance, SLC2A4/GLUT4 glucose transporter-enriched vesicles delivery to the plasma membrane. In parallel, it regulates the transport of TLR4, a toll-like receptor to the plasma membrane and therefore may be important for innate immune response. Also plays a specific role in asymmetric protein transport to the plasma membrane. In neurons, it is involved in axonogenesis through regulation of vesicular membrane trafficking toward the axonal plasma membrane. In epithelial cells, it regulates transport from the Golgi to the basolateral membrane. May play a role in the basolateral recycling pathway and in phagosome maturation. May play a role in endoplasmic reticulum dynamics and morphology controlling tubulation along microtubules and tubules fusion. Together with LRRK2, RAB8A, and RILPL1, it regulates ciliogenesis. When phosphorylated by LRRK2 on Thr-73, it binds RILPL1 and inhibits ciliogenesis. Participates in the export of a subset of neosynthesized proteins through a Rab8-Rab10-Rab11-dependent endososomal export route. Targeted to and stabilized on stressed lysosomes through LRRK2 phosphorylation where it promotes the extracellular release of lysosomal content through EHBP1 and EHNP1L1 effector proteins. The sequence is that of Ras-related protein Rab-10 from Rattus norvegicus (Rat).